Consider the following 226-residue polypeptide: Protein pdh1 (226 aa).

The first 26 residues, 1-26, serve as a signal peptide directing secretion; it reads MNHFSKFSVTKRLLILEVLFSAISFG. The Extracellular segment spans residues 27-41; that stretch reads ISIYIKVFGRSSIVT. Residues 42 to 62 traverse the membrane as a helical segment; that stretch reads FFLLCFHLVPNALFLFPWTII. Over 63–65 the chain is Cytoplasmic; it reads TTS. The helical transmembrane segment at 66-86 threads the bilayer; the sequence is FVDANVFTLLSSILILSVYGV. Residues 87–97 lie on the Extracellular side of the membrane; that stretch reads EIERSWGHKEY. The helical transmembrane segment at 98–118 threads the bilayer; the sequence is LLFCQFLTVIPNIAVLIPCFI. Over 119–191 the chain is Cytoplasmic; the sequence is AYKITDSHYL…VFQSFPWTYF (73 aa). The helical transmembrane segment at 192–212 threads the bilayer; the sequence is CLAVSGTCISELYVLFVHPVV. The Extracellular portion of the chain corresponds to 213–226; the sequence is QELFHLESHTQLPI.

It localises to the membrane. The chain is Protein pdh1 (pdh1) from Schizosaccharomyces pombe (strain 972 / ATCC 24843) (Fission yeast).